A 125-amino-acid chain; its full sequence is Ribosome-binding factor A (125 aa).

The protein belongs to the RbfA family. In terms of assembly, monomer. Binds 30S ribosomal subunits, but not 50S ribosomal subunits or 70S ribosomes.

Its subcellular location is the cytoplasm. Its function is as follows. One of several proteins that assist in the late maturation steps of the functional core of the 30S ribosomal subunit. Associates with free 30S ribosomal subunits (but not with 30S subunits that are part of 70S ribosomes or polysomes). Required for efficient processing of 16S rRNA. May interact with the 5'-terminal helix region of 16S rRNA. The protein is Ribosome-binding factor A of Thermosipho melanesiensis (strain DSM 12029 / CIP 104789 / BI429).